We begin with the raw amino-acid sequence, 140 residues long: Ribosomal RNA large subunit methyltransferase H (140 aa).

Residues Leu-58, Gly-90, and 108–113 (LSLLTF) each bind S-adenosyl-L-methionine.

It belongs to the RNA methyltransferase RlmH family. As to quaternary structure, homodimer.

It localises to the cytoplasm. It carries out the reaction pseudouridine(1915) in 23S rRNA + S-adenosyl-L-methionine = N(3)-methylpseudouridine(1915) in 23S rRNA + S-adenosyl-L-homocysteine + H(+). Functionally, specifically methylates the pseudouridine at position 1915 (m3Psi1915) in 23S rRNA. The sequence is that of Ribosomal RNA large subunit methyltransferase H from Protochlamydia amoebophila (strain UWE25).